The sequence spans 330 residues: Carbonic anhydrase (330 aa).

Residues 1–109 (MSTASAFATN…AAARIDQITA (109 aa)) form a chloroplast transit peptide-like region.

The protein belongs to the beta-class carbonic anhydrase family.

Its subcellular location is the cytoplasm. The catalysed reaction is hydrogencarbonate + H(+) = CO2 + H2O. Its function is as follows. Reversible hydration of carbon dioxide. This chain is Carbonic anhydrase, found in Flaveria brownii (Brown's yellowtops).